Here is a 476-residue protein sequence, read N- to C-terminus: Elongation factor Tu, chloroplastic (476 aa).

The transit peptide at 1-67 directs the protein to the chloroplast; the sequence is MAISAPAACS…QSTRRSFTVR (67 aa). Residues 77–281 enclose the tr-type G domain; sequence KPHVNIGTIG…AVDDYIPIPQ (205 aa). The tract at residues 86–93 is G1; the sequence is GHVDHGKT. GTP is bound at residue 86 to 93; it reads GHVDHGKT. Residue threonine 94 is modified to Phosphothreonine. Residues 127–131 are G2; that stretch reads GITIN. The G3 stretch occupies residues 148–151; sequence DCPG. GTP-binding positions include 148 to 152 and 203 to 206; these read DCPGH and NKED. Positions 203 to 206 are G4; the sequence is NKED. The segment at 241 to 243 is G5; it reads SAL.

It belongs to the TRAFAC class translation factor GTPase superfamily. Classic translation factor GTPase family. EF-Tu/EF-1A subfamily. As to quaternary structure, interacts with PI5K2. Interacts with APD2.

It localises to the plastid. The protein localises to the chloroplast. This protein promotes the GTP-dependent binding of aminoacyl-tRNA to the A-site of ribosomes during protein biosynthesis. In Arabidopsis thaliana (Mouse-ear cress), this protein is Elongation factor Tu, chloroplastic (TUFA).